We begin with the raw amino-acid sequence, 308 residues long: Aspartate carbamoyltransferase catalytic subunit (308 aa).

Residues arginine 55 and threonine 56 each contribute to the carbamoyl phosphate site. Residue lysine 83 participates in L-aspartate binding. Carbamoyl phosphate is bound by residues arginine 105, histidine 133, and glutamine 136. Arginine 166 and arginine 223 together coordinate L-aspartate. Residues glycine 264 and proline 265 each contribute to the carbamoyl phosphate site.

It belongs to the aspartate/ornithine carbamoyltransferase superfamily. ATCase family. Heterododecamer (2C3:3R2) of six catalytic PyrB chains organized as two trimers (C3), and six regulatory PyrI chains organized as three dimers (R2).

It catalyses the reaction carbamoyl phosphate + L-aspartate = N-carbamoyl-L-aspartate + phosphate + H(+). Its pathway is pyrimidine metabolism; UMP biosynthesis via de novo pathway; (S)-dihydroorotate from bicarbonate: step 2/3. In terms of biological role, catalyzes the condensation of carbamoyl phosphate and aspartate to form carbamoyl aspartate and inorganic phosphate, the committed step in the de novo pyrimidine nucleotide biosynthesis pathway. The polypeptide is Aspartate carbamoyltransferase catalytic subunit (Salinispora tropica (strain ATCC BAA-916 / DSM 44818 / JCM 13857 / NBRC 105044 / CNB-440)).